The primary structure comprises 205 residues: Adenylyl-sulfate kinase (205 aa).

31-38 contacts ATP; that stretch reads GLSGSGKS. Catalysis depends on Ser-105, which acts as the Phosphoserine intermediate.

The protein belongs to the APS kinase family.

The catalysed reaction is adenosine 5'-phosphosulfate + ATP = 3'-phosphoadenylyl sulfate + ADP + H(+). It functions in the pathway sulfur metabolism; hydrogen sulfide biosynthesis; sulfite from sulfate: step 2/3. In terms of biological role, catalyzes the synthesis of activated sulfate. This Shewanella halifaxensis (strain HAW-EB4) protein is Adenylyl-sulfate kinase.